Reading from the N-terminus, the 288-residue chain is Transposase InsF for insertion sequence IS3A (288 aa).

Residues 124–287 (YASGPNQKWA…SPEQFENKNL (164 aa)) form the Integrase catalytic domain.

The protein belongs to the transposase IS3/IS150/IS904 family.

Its function is as follows. Involved in the transposition of the insertion sequence IS3. This chain is Transposase InsF for insertion sequence IS3A (insF1), found in Escherichia coli (strain K12).